The chain runs to 84 residues: LYR motif-containing protein 5B (84 aa).

It belongs to the complex I LYR family.

The polypeptide is LYR motif-containing protein 5B (lyrm5b) (Danio rerio (Zebrafish)).